The primary structure comprises 197 residues: Elongation factor Ts (197 aa).

An involved in Mg(2+) ion dislocation from EF-Tu region spans residues 81–84 (TDFV).

The protein belongs to the EF-Ts family.

Its subcellular location is the cytoplasm. Associates with the EF-Tu.GDP complex and induces the exchange of GDP to GTP. It remains bound to the aminoacyl-tRNA.EF-Tu.GTP complex up to the GTP hydrolysis stage on the ribosome. The sequence is that of Elongation factor Ts from Thermotoga neapolitana (strain ATCC 49049 / DSM 4359 / NBRC 107923 / NS-E).